Reading from the N-terminus, the 275-residue chain is Hydroxyethylthiazole kinase (275 aa).

Residue methionine 57 participates in substrate binding. Arginine 132 and serine 178 together coordinate ATP. Glycine 205 is a binding site for substrate.

The protein belongs to the Thz kinase family. Requires Mg(2+) as cofactor.

It catalyses the reaction 5-(2-hydroxyethyl)-4-methylthiazole + ATP = 4-methyl-5-(2-phosphooxyethyl)-thiazole + ADP + H(+). It participates in cofactor biosynthesis; thiamine diphosphate biosynthesis; 4-methyl-5-(2-phosphoethyl)-thiazole from 5-(2-hydroxyethyl)-4-methylthiazole: step 1/1. Catalyzes the phosphorylation of the hydroxyl group of 4-methyl-5-beta-hydroxyethylthiazole (THZ). The protein is Hydroxyethylthiazole kinase of Clavibacter sepedonicus (Clavibacter michiganensis subsp. sepedonicus).